A 426-amino-acid chain; its full sequence is Histidine--tRNA ligase (426 aa).

Belongs to the class-II aminoacyl-tRNA synthetase family. In terms of assembly, homodimer.

Its subcellular location is the cytoplasm. The catalysed reaction is tRNA(His) + L-histidine + ATP = L-histidyl-tRNA(His) + AMP + diphosphate + H(+). In Geobacillus thermodenitrificans (strain NG80-2), this protein is Histidine--tRNA ligase.